Here is a 293-residue protein sequence, read N- to C-terminus: Iron-sulfur cluster transfer protein Nubpl (293 aa).

The segment at 214–217 (CQNC) is CXXC motif probably involved in coordinating iron-sulfur cluster binding.

The protein belongs to the Mrp/NBP35 ATP-binding proteins family. Homodimer; dimerization is not reliant on iron-sulfur cluster binding. [4Fe-4S] cluster serves as cofactor.

It localises to the mitochondrion membrane. Its function is as follows. Iron-sulfur cluster transfer protein involved in the assembly of the mitochondrial membrane respiratory chain NADH dehydrogenase (Complex I). May deliver one or more Fe-S clusters to complex I subunits. Alleviates pausing in mitochondrial DNA (mtDNA) replication at slow zone 2. May be involved in mtDNA-helicase-mediated mtDNA unwinding and replication by transferring iron-sulfur clusters. The chain is Iron-sulfur cluster transfer protein Nubpl from Drosophila melanogaster (Fruit fly).